Reading from the N-terminus, the 357-residue chain is Meiotic driver wtf9 (357 aa).

The segment at 1–39 (MKNKYYPLRSSMDEMSAKNDNEIDLEKGPLPEYNSEDGS) is disordered. Basic and acidic residues predominate over residues 11–29 (SMDEMSAKNDNEIDLEKGP). The next 7 helical transmembrane spans lie at 89–109 (LLISVLAVIVVFFTAWVCVNP), 119–139 (AFFVTIGITCPILLITIFCFF), 149–169 (CIKVTVIFLAQCVKVTVISLA), 198–218 (VVIIWLLWVVICYTLFLRSKF), 232–252 (CSISAALLLFLLYVRLPFWTL), 256–276 (FSGLFQVLGVQSCVVIVTKGL), and 286–306 (ATGYEIEASSLFVIGNFLFFY).

It belongs to the WTF family. In terms of assembly, homomer. Forms protein aggregates. The two isoforms can interact with each other and with themselves. High sequence similarity is required for their interaction.

The protein localises to the spore membrane. It is found in the vacuole membrane. Its subcellular location is the ascus epiplasm. The protein resides in the cytoplasm. It localises to the endoplasmic reticulum membrane. Functionally, promotes unequal transmission of alleles from the parental zygote to progeny spores by acting as poison/antidote system where the poison and antidote proteins are produced from the same locus; the poison component is trans-acting and targets all spores within an ascus whereas the antidote component is spore-specific, leading to poisoning of all progeny that do not inherit the allele. Localizes isoform 2 to the vacuole thereby facilitating its degradation. In terms of biological role, forms toxic aggregates that disrupt spore maturation. The polypeptide is Meiotic driver wtf9 (Schizosaccharomyces kambucha (Fission yeast)).